The following is a 256-amino-acid chain: Receptor expression-enhancing protein 3 (256 aa).

The next 3 membrane-spanning stretches (helical) occupy residues 1-21 (MVSWMISRSVVLVFGNLYPAY), 42-62 (WIVFALFTVVETVADLTIAWF), and 68-88 (IKIAFVIWLLSPYTRGASVIY). The disordered stretch occupies residues 177–256 (IMDQPDGAEY…NATTYSNMES (80 aa)). The span at 247-256 (NATTYSNMES) shows a compositional bias: polar residues.

It belongs to the DP1 family.

Its subcellular location is the endoplasmic reticulum membrane. Microtubule-binding protein required to ensure proper cell division and nuclear envelope reassembly by sequestering the endoplasmic reticulum away from chromosomes during mitosis. Probably acts by clearing the endoplasmic reticulum membrane from metaphase chromosomes. The sequence is that of Receptor expression-enhancing protein 3 (reep3) from Danio rerio (Zebrafish).